Here is a 179-residue protein sequence, read N- to C-terminus: Large ribosomal subunit protein uL5 (179 aa).

Belongs to the universal ribosomal protein uL5 family. In terms of assembly, part of the 50S ribosomal subunit; part of the 5S rRNA/L5/L18/L25 subcomplex. Contacts the 5S rRNA and the P site tRNA. Forms a bridge to the 30S subunit in the 70S ribosome.

In terms of biological role, this is one of the proteins that bind and probably mediate the attachment of the 5S RNA into the large ribosomal subunit, where it forms part of the central protuberance. In the 70S ribosome it contacts protein S13 of the 30S subunit (bridge B1b), connecting the 2 subunits; this bridge is implicated in subunit movement. Contacts the P site tRNA; the 5S rRNA and some of its associated proteins might help stabilize positioning of ribosome-bound tRNAs. This Geobacillus kaustophilus (strain HTA426) protein is Large ribosomal subunit protein uL5.